The primary structure comprises 112 residues: Tyrosine-protein phosphatase 7 (112 aa).

Positions asparagine 1–valine 112 constitute a Tyrosine-protein phosphatase domain. Aspartate 82 is a substrate binding site.

Belongs to the protein-tyrosine phosphatase family.

It carries out the reaction O-phospho-L-tyrosyl-[protein] + H2O = L-tyrosyl-[protein] + phosphate. The polypeptide is Tyrosine-protein phosphatase 7 (STY-7) (Styela plicata (Wrinkled sea squirt)).